Here is a 466-residue protein sequence, read N- to C-terminus: Soluble pyridine nucleotide transhydrogenase (466 aa).

36 to 45 (ERYQNVGGGC) contacts FAD.

Belongs to the class-I pyridine nucleotide-disulfide oxidoreductase family. In terms of assembly, homooligomer; probable homooctamer. Requires FAD as cofactor.

It localises to the cytoplasm. It carries out the reaction NAD(+) + NADPH = NADH + NADP(+). Functionally, conversion of NADPH, generated by peripheral catabolic pathways, to NADH, which can enter the respiratory chain for energy generation. The sequence is that of Soluble pyridine nucleotide transhydrogenase from Escherichia coli O6:H1 (strain CFT073 / ATCC 700928 / UPEC).